A 567-amino-acid polypeptide reads, in one-letter code: uncharacterized protein (567 aa).

Residues 1-26 (MPSEKATTRHLPGAVETLSPRTGRRP) form a disordered region. 6 helical membrane passes run 57–77 (AILVTNVIGLIVGAMLLTVAF), 90–110 (VSFGIVPGYCVLAFILGTYWL), 142–162 (VALAVLFLWGAAAALWTIIYG), 173–193 (LFSMGVIGVVAATSCYLLTEF), 221–241 (MLVWLLCSGVPNVGVALTAIF), and 257–277 (VLILWAPLLIFGFILMWILAW). Positions 278–329 (LTATPVRVVREALNRVEQGDLSGDLVVFDGTELGELQRGFNRMVEGLRERER) constitute an HAMP domain. Residues 361–485 (AVVFVDIVGS…EPVNEAARLC (125 aa)) enclose the Guanylate cyclase domain.

The protein belongs to the adenylyl cyclase class-3 family.

The protein localises to the cell membrane. This is an uncharacterized protein from Mycobacterium tuberculosis (strain ATCC 25618 / H37Rv).